The chain runs to 716 residues: Protein C-mannosyl-transferase DPY19L3 (716 aa).

Residues 1–43 (MMSIRQRREIRATEVSEDFPAQEENVKLENKLPSGCTSRRLWK) are Cytoplasmic-facing. A helical transmembrane segment spans residues 44-64 (ILSLTIGGTIALCIGLLTSVY). The Lumenal segment spans residues 65-154 (LATLHENDLW…RVLPIQKYLE (90 aa)). N-linked (GlcNAc...) asparagine glycosylation is present at Asn-118. Residues 155-182 (PVYFYIYTLFGLQAIYVTALYITSWLLS) form a helical membrane-spanning segment. At 183–184 (GT) the chain is on the cytoplasmic side. An intramembrane region (name=3) is located at residues 185-197 (WLSGLLAAFWYVT). Residues 198–215 (NRIDTTRVEFTIPLRENW) lie on the Cytoplasmic side of the membrane. Positions 216-230 (ALPFFAIQIAAITYF) form an intramembrane region, name=4. The Cytoplasmic portion of the chain corresponds to 231–239 (LRPNLQPLS). Residues 240 to 256 (ERLTLLAIFISTFLFSL) form a helical membrane-spanning segment. At 257–262 (TWQFNQ) the chain is on the lumenal side. Residues 263–279 (FMMLMQALVLFTLDSLD) traverse the membrane as a helical segment. The Cytoplasmic portion of the chain corresponds to 280 to 289 (MLPAVKATWL). Residues 290-306 (YGIQITSLLLVCILQFF) form a helical membrane-spanning segment. At 307 to 308 (NS) the chain is on the lumenal side. Residues 309–323 (MILGSLLISFNLSVF) traverse the membrane as a helical segment. Topologically, residues 324–338 (IARKLQKNLKTGSFL) are cytoplasmic. Residues 339-359 (NRLGKLLLHLFMVLCLTLFLN) traverse the membrane as a helical segment. Residues 360–414 (NIIKKILNLKSDEHIFKFLKAKFGLGATRDFDANLYLCEEAFGLLPFNTFGRLSD) lie on the Lumenal side of the membrane. Residues 415–437 (TLLFYAYIFVLSITVIVAFVVAF) form a helical membrane-spanning segment. At 438 to 465 (HNLSDSTNQQSVGKMEKGTVDLKPETAY) the chain is on the cytoplasmic side. A helical membrane pass occupies residues 466-485 (NLIHTILFGFLALSTMRMKY). Over 486-487 (LW) the chain is Lumenal. Residues 488–499 (TSHMCVFASFGL) traverse the membrane as a helical segment. Topologically, residues 500 to 522 (CSPEIWELLLKSVHLYNPKRICI) are cytoplasmic. A helical membrane pass occupies residues 523 to 539 (MRYSVPILILLYLCYKF). Topologically, residues 540 to 716 (WPGMMDELSE…FHVYKLSRNK (177 aa)) are lumenal. A glycan (N-linked (GlcNAc...) asparagine) is linked at Asn-704.

The protein belongs to the dpy-19 family. In terms of tissue distribution, widely expressed.

Its subcellular location is the endoplasmic reticulum membrane. It carries out the reaction L-tryptophyl-[protein] + a di-trans,poly-cis-dolichyl beta-D-mannosyl phosphate = C-alpha-D-mannosyl-L-tryptophyl-[protein] + a di-trans,poly-cis-dolichyl phosphate + H(+). Its pathway is protein modification; protein glycosylation. Its function is as follows. C-mannosyltransferase that mediates C-mannosylation of tryptophan residues on target proteins. The reaction occurs on the luminal side of the endoplasmic reticulum and involves the transfer of a mannose unit from a dolichylphosphate mannose (Dol-P-Man) donor to an acceptor protein containing a WxxW or WxxC consensus sequence. C-mannosylates RSPO1, a Wnt signaling regulator, preferentially at the first Trp residue in the sequence WxxW. C-mannosylates the netrin receptor UNC5A, preferentially at the third tryptophan of WxxWxxWxxC sequence. Functionally, has no C-mannosyltransferase activity. In Homo sapiens (Human), this protein is Protein C-mannosyl-transferase DPY19L3 (DPY19L3).